The chain runs to 214 residues: Sugar transporter SWEET1 (214 aa).

Helical transmembrane passes span 3 to 23 (WMWL…SSGL), 38 to 58 (IQFL…YYGY), 65 to 85 (LIIV…AYIL), 93 to 113 (VVSQ…YFTL), 125 to 145 (LGLF…ADLA), 157 to 177 (SFPL…YGWV), and 181 to 201 (LYIT…FWLF). The MtN3/slv 1 domain maps to 6-89 (LLSGACIVFT…MAAYILYSLE (84 aa)). In terms of domain architecture, MtN3/slv 2 spans 124 to 207 (QLGLFCSIFT…FWLFSRYPPD (84 aa)).

The protein belongs to the SWEET sugar transporter family.

It is found in the golgi apparatus membrane. The protein resides in the cell membrane. Functionally, mediates sugar transport across membranes. The chain is Sugar transporter SWEET1 (slc50a1) from Xenopus tropicalis (Western clawed frog).